The chain runs to 934 residues: MTRSFADRHIGPDAAELSRILEVVGVDSLDALAAAALPASILDDAGAGPLAALPPAVSEHEALAELAALAQSNTVTTSMIGLGYYDTLTPPVLVRNLLENPAWYTAYTPYQPEISQGRLEALLNFQTMVSDLTGMEVANASMLDEATAAAEAMTLLRRAGRSRSNRLLIDADLFPQTRTVLHTRAEPLGIEIVEADLAAAGLPEGGFFGVIVQVPGASGRVVDWTALIAAAHERGALVAAGADLLAMTLIVPPGEQGADVCFGTTQRFGVPMGFGGPHAGYLAVRSAHARQLPGRLVGVSKDADGNPAYRLALQTREQHIRREKATSNICTAQVLLAIVAAMYACYHGADGLRAIARRVHGHAARIAGALGEALVHDTYFDTVLARVPGHAEAVVAKAAACGITLRLVDPDHVAVACDEATTDAHVEAVLDAFGVAPAEPVDAGIATRTSEFLTHPAFTRYRTETAMLRYLRSLSDKDIALDRSMIPLGSCTMKLNATAEMEPITWPGFAKLHPYAPVEHAPGLLKLIGDLESWLAEITGYDAVSLQPNAGSQGEYAGLLAIRRYHLDRGDTHRDTCLIPSSAHGTNAASAAMAGLRVEVVKCRENGDVDLDDLRAKITDHAERLACIMITYPSTHGVYEHEIAELCALVHDAGGQVYVDGANLNALVGLARPGRFGGDVSHLNLHKTFCIPHGGGGPGVGPVAVRAHLAQYLPGDPLESGSHAVSAARYGSASILPITWAYIRMMGAEGLRKATLTAIASANYLARRLDEYFPVLYTGENGMVAHECILDLRELTKRTGVTVDDVAKRLADYGFHAPTMSFPVAGTLMVEPTESENLAELDEFVAAMIAIRAEIDQVGAGVWPAEDNPLRGAPHTAECLVGEWTHPYSREIAVYPRGLGHARAKVWPAVRRIDGAYGDRNLVCSCPPLEAYAE.

Lys687 is subject to N6-(pyridoxal phosphate)lysine.

The protein belongs to the GcvP family. As to quaternary structure, the glycine cleavage system is composed of four proteins: P, T, L and H. The cofactor is pyridoxal 5'-phosphate.

The enzyme catalyses N(6)-[(R)-lipoyl]-L-lysyl-[glycine-cleavage complex H protein] + glycine + H(+) = N(6)-[(R)-S(8)-aminomethyldihydrolipoyl]-L-lysyl-[glycine-cleavage complex H protein] + CO2. In terms of biological role, the glycine cleavage system catalyzes the degradation of glycine. The P protein binds the alpha-amino group of glycine through its pyridoxal phosphate cofactor; CO(2) is released and the remaining methylamine moiety is then transferred to the lipoamide cofactor of the H protein. This is Glycine dehydrogenase (decarboxylating) from Nocardia farcinica (strain IFM 10152).